Reading from the N-terminus, the 348-residue chain is Beta-hexosaminidase (348 aa).

Substrate-binding positions include aspartate 64, arginine 72, arginine 138, and 168-169 (KH). Histidine 181 acts as the Proton donor/acceptor in catalysis. Residue aspartate 252 is the Nucleophile of the active site.

The protein belongs to the glycosyl hydrolase 3 family. NagZ subfamily.

It is found in the cytoplasm. The catalysed reaction is Hydrolysis of terminal non-reducing N-acetyl-D-hexosamine residues in N-acetyl-beta-D-hexosaminides.. The protein operates within cell wall biogenesis; peptidoglycan recycling. Its function is as follows. Plays a role in peptidoglycan recycling by cleaving the terminal beta-1,4-linked N-acetylglucosamine (GlcNAc) from peptide-linked peptidoglycan fragments, giving rise to free GlcNAc, anhydro-N-acetylmuramic acid and anhydro-N-acetylmuramic acid-linked peptides. This Alkalilimnicola ehrlichii (strain ATCC BAA-1101 / DSM 17681 / MLHE-1) protein is Beta-hexosaminidase.